The primary structure comprises 815 residues: Capsid vertex component 1 (815 aa).

Disordered regions lie at residues 227-280 and 795-815; these read THEQ…GDRE and RAPS…TILY. Basic and acidic residues-rich tracts occupy residues 236-262 and 271-280; these read PPKE…KDAA and NRQREPGDRE. Residues 799–809 are compositionally biased toward polar residues; sequence DFSTTSTSGHE.

The protein belongs to the herpesviridae CVC1 protein family. As to quaternary structure, interacts (via C-terminus) with capsid vertex component 2/CVC2.

Its subcellular location is the virion. The protein localises to the host nucleus. Its function is as follows. Capsid vertex-specific component that plays a role during viral DNA encapsidation, assuring correct genome cleavage and presumably stabilizing capsids that contain full-length viral genomes. In Amazona oratrix (yellow-headed parrot), this protein is Capsid vertex component 1.